Consider the following 128-residue polypeptide: Ribosome-binding factor A (128 aa).

It belongs to the RbfA family. Monomer. Binds 30S ribosomal subunits, but not 50S ribosomal subunits or 70S ribosomes.

The protein localises to the cytoplasm. Functionally, one of several proteins that assist in the late maturation steps of the functional core of the 30S ribosomal subunit. Associates with free 30S ribosomal subunits (but not with 30S subunits that are part of 70S ribosomes or polysomes). Required for efficient processing of 16S rRNA. May interact with the 5'-terminal helix region of 16S rRNA. This Herminiimonas arsenicoxydans protein is Ribosome-binding factor A.